A 182-amino-acid polypeptide reads, in one-letter code: Orotate phosphoribosyltransferase (182 aa).

Residues R96, K97, K100, H102, and 122 to 130 (EDTSTTGGS) contribute to the 5-phospho-alpha-D-ribose 1-diphosphate site. Positions 126 and 154 each coordinate orotate.

The protein belongs to the purine/pyrimidine phosphoribosyltransferase family. PyrE subfamily. Homodimer. Requires Mg(2+) as cofactor.

It carries out the reaction orotidine 5'-phosphate + diphosphate = orotate + 5-phospho-alpha-D-ribose 1-diphosphate. Its pathway is pyrimidine metabolism; UMP biosynthesis via de novo pathway; UMP from orotate: step 1/2. Catalyzes the transfer of a ribosyl phosphate group from 5-phosphoribose 1-diphosphate to orotate, leading to the formation of orotidine monophosphate (OMP). This chain is Orotate phosphoribosyltransferase, found in Streptomyces coelicolor (strain ATCC BAA-471 / A3(2) / M145).